Here is a 397-residue protein sequence, read N- to C-terminus: Transcription factor GATA-5 (397 aa).

The disordered stretch occupies residues 48-116; sequence GCEPSPQPPE…SAGGRDGSAY (69 aa). Residues 87–101 are compositionally biased toward low complexity; it reads PPGATAFPFAHSPSG. A compositionally biased stretch (gly residues) spans 102–112; it reads PGSGGSAGGRD. GATA-type zinc fingers lie at residues 189-213 and 243-267; these read CVNC…CNAC and CTNC…CNAC. Residues 281–356 are disordered; that stretch reads AMKKESIQTR…ASGQEDDSLA (76 aa). A compositionally biased stretch (basic residues) spans 289-298; the sequence is TRKRKPKTIA. Over residues 310 to 335 the composition is skewed to low complexity; that stretch reads ASASPSAVASTDSSAATSKAKPSLAS.

The protein resides in the nucleus. Transcription factor required during cardiovascular development. Plays an important role in the transcriptional program(s) that underlies smooth muscle cell diversity. Binds to the functionally important CEF-1 nuclear protein binding site in the cardiac-specific slow/cardiac troponin C transcriptional enhancer. This Homo sapiens (Human) protein is Transcription factor GATA-5.